The sequence spans 484 residues: Cobyric acid synthase (484 aa).

The 188-residue stretch at 248–435 folds into the GATase cobBQ-type domain; sequence VLKVIVPVLP…LHGLFEGSQS (188 aa). Catalysis depends on Cys329, which acts as the Nucleophile. Residue His427 is part of the active site.

The protein belongs to the CobB/CobQ family. CobQ subfamily.

The protein operates within cofactor biosynthesis; adenosylcobalamin biosynthesis. In terms of biological role, catalyzes amidations at positions B, D, E, and G on adenosylcobyrinic A,C-diamide. NH(2) groups are provided by glutamine, and one molecule of ATP is hydrogenolyzed for each amidation. The sequence is that of Cobyric acid synthase from Pseudomonas putida (strain W619).